Reading from the N-terminus, the 43-residue chain is Protein PsbN (43 aa).

Residues 5 to 27 (TLVAISISCLLVSFTGYALYTAF) form a helical membrane-spanning segment.

Belongs to the PsbN family.

Its subcellular location is the plastid. It localises to the chloroplast thylakoid membrane. May play a role in photosystem I and II biogenesis. The polypeptide is Protein PsbN (Cedrus deodara (Deodar cedar)).